An 85-amino-acid chain; its full sequence is Makatoxin-2 (85 aa).

The N-terminal stretch at Met-1–Ser-19 is a signal peptide. The 63-residue stretch at Arg-21 to Arg-83 folds into the LCN-type CS-alpha/beta domain. 4 disulfide bridges follow: Cys-31–Cys-82, Cys-35–Cys-55, Cys-41–Cys-65, and Cys-45–Cys-67.

Belongs to the long (4 C-C) scorpion toxin superfamily. Sodium channel inhibitor family. Alpha subfamily. As to expression, expressed by the venom gland.

It localises to the secreted. Its function is as follows. This protein markedly relaxes the rat carbachol-precontracted anococcygeus muscle. This relaxation is inhibited by the inhibitor of nitric oxide (NO) synthase, N-nitro-L-arginine methyl ester (L-NAME), suggesting that the response induced by this protein is NO-mediated. The protein is Makatoxin-2 of Olivierus martensii (Manchurian scorpion).